Consider the following 842-residue polypeptide: Pentatricopeptide repeat-containing protein At3g23020 (842 aa).

Residues 40–61 (YVPGTHESDKGPQRSTRNGDRG) form a disordered region. The segment covering 45–59 (HESDKGPQRSTRNGD) has biased composition (basic and acidic residues). PPR repeat units lie at residues 186–220 (NVIH…GIKP), 221–255 (INST…GMQP), 256–290 (DEVT…ENKA), 297–331 (SSYT…GIVP), 332–362 (TTVT…MKLH), 366–400 (DTRT…GLKP), 401–435 (DPVS…NVEI), 436–470 (DEYT…GNMS), 474–500 (YSAN…CQEV), 504–538 (TVIE…GVTP), 539–573 (DKCT…GYVS), 574–608 (DCIP…NIEP), 609–643 (DVVV…GIPG), 644–674 (NSVI…LLQS), 682–712 (DVYT…MKQR), 716–750 (NEFT…KILT), 751–785 (DPLS…GIQP), and 786–820 (DDST…EIKR).

The protein belongs to the PPR family. P subfamily.

This chain is Pentatricopeptide repeat-containing protein At3g23020, found in Arabidopsis thaliana (Mouse-ear cress).